A 1009-amino-acid polypeptide reads, in one-letter code: MSADPINDQSSLCVRCNKSIASSQVYELESKKWHDQCFTCYKCDKKLNADSDFLVLDIGTLICYDCSDKCTNCGDKIDDTAIILPSSNEAYCSNCFRCCRCSNRIKNLKYAKTKRGLCCMDCHEKLLRKKQLLLENQTKNSSKEDFPIKLPERSVKRPLSPTRINGKSDVSTNNTAISKNLVSSNEDQQLTPQVLVSQERDESSLNDNNDNDNSKDREETSSHARTVSIDDILNSTLEHDSNSIEEQSLVDNEDYINKMGEDVTYRLLKPQRANRDSIVVKDPRIPNSNSNANRFFSIYDKEETDKDDTDNKENEIIVNTPRNSTDKITSPLNSPMAVQMNEEVEPPHGLALTLSEATKENNKSSQGIQTSTSKSMNHVSPITRTDTVEMKTSTSSSTLRLSDNGSFSRPQTADNLLPHKKVAPSPNKKLSRSFSLKSKNFVHNLKSKTSEMLDPKHPHHSTSIQESDTHSGWGVSSTHTNIRKSKAKKNPVSRGQSDSTIYNTLPQHGNFTVPEFNHKKAQSSLGSISKKQNSNDTATNRRINGSFTSSSSGHHIAMFRTPPLESGPLFKRPSLSSESAHHRSSSLQTSRSTNALLEDDSTKVDATDESATSLEKDFYFTELTLRKLKLDVRELEGTKKKLLQDVENLRLAKERLLNDVDNLTREKDKQSASSRESLEQKENIATSITVKSPSSNSDRKGSISNASPKPRFWKIFSSAKDHQVGDLESQQRSPNSSSGGTTNIAQKEISSPKLIRVHDELPSPGKVPLSPSPKRLDYTPDGSHLYGSSLQARCAYEKSTVPIIIRCCIDRIEKDDIGLNMEGLYRKSGSQTLVEEIENEFAQNNSLHSDTLSPKLNALLNQDIHAVASVLKRYLRKLPDPVLSFSIYDALIDLVRNNQLIERLPLNNDKFLDSPQKVTIYEMVLKSLLEIFKILPVEHQEVLKVLAAHIGKVRRCSERNLMNLHNLSLVFAPSLIHDFDGEKDIVDMKERNYIVEFILGNYRDIFKQA.

LIM zinc-binding domains lie at 11–68 (SLCV…DCSD) and 69–129 (KCTN…LLRK). The span at 143-155 (KEDFPIKLPERSV) shows a compositional bias: basic and acidic residues. Disordered regions lie at residues 143 to 228 (KEDF…RTVS), 358 to 433 (TKEN…LSRS), 449 to 608 (TSEM…DATD), 664 to 709 (TREK…ASPK), and 723 to 780 (QVGD…DYTP). The span at 162-196 (TRINGKSDVSTNNTAISKNLVSSNEDQQLTPQVLV) shows a compositional bias: polar residues. Positions 212–222 (DNSKDREETSS) are enriched in basic and acidic residues. Composition is skewed to polar residues over residues 363–385 (KSSQ…ITRT) and 399–414 (LRLS…QTAD). Residues 481 to 491 (NIRKSKAKKNP) show a composition bias toward basic residues. Composition is skewed to polar residues over residues 493-510 (SRGQ…QHGN) and 522-553 (QSSL…SSSG). Residues 664–682 (TREKDKQSASSRESLEQKE) are compositionally biased toward basic and acidic residues. 2 stretches are compositionally biased toward polar residues: residues 683-707 (NIAT…SNAS) and 728-749 (ESQQ…QKEI). Position 763 is a phosphoserine (serine 763). Residues 788 to 1006 (SSLQARCAYE…FILGNYRDIF (219 aa)) form the Rho-GAP domain.

Its function is as follows. GTPase-activating protein (GAP) for CDC42 and/or RHO1. The polypeptide is Rho-type GTPase-activating protein 2 (RGA2) (Saccharomyces cerevisiae (strain ATCC 204508 / S288c) (Baker's yeast)).